The sequence spans 320 residues: Epoxidase atD (320 aa).

Asn-245 and Asn-299 each carry an N-linked (GlcNAc...) asparagine glycan.

The protein operates within secondary metabolite biosynthesis. Epoxidase; part of the gene cluster that mediates the biosynthesis of terreic acid, a quinone epoxide inhibitor of Bruton's tyrosine kinase. The first step of the pathway is the synthesis of 6-methylsalicylic acid (6-MSA) by the 6-methylsalicylic acid synthase atX. In the biosynthesis of 6-MSA, atX utilizes one acetyl-CoA and three malonyl-CoAs as its substrates and catalyzes a series of programmed reactions including Claisen condensation, reduction, aldol cyclization, and the hydrolytic cleavage that yields 6-MSA. The 6-methylsalicylate 1-monooxygenase atA then catalyzes the decarboxylative hydroxylation of 6-MSA to 3-methylcatechol. The next step is the conversion of 3-methylcatechol to 3-methyl-1,2,4-benzenetriol by cytochrome P450 monooxygenase atE, which is enhanced by cytochrome P450 monooxygenase atG. Then, the epoxidase atD catalyzes the epoxidation and hydroxyl oxidation of 3-methyl-1,2,4-benzenetriol to terremutin. Lastly, GMC oxidoreductase atC oxidizes terremutin to terreic acid. This is Epoxidase atD from Aspergillus terreus (strain NIH 2624 / FGSC A1156).